The sequence spans 681 residues: MLMTAAADVTRRSPRRVFRDRREAGRVLAELLAAYRDQPDVIVLGLARGGLPVAWEVAAALHAPLDAFVVRKLGAPGHDEFAVGALASGGRVVVNDDVVRGLRITPQQLRDIAEREGRELLRRESAYRGERPPTDITGKTVIVVDDGLATGASMFAAVQALRDAQPAQIVIAVPAAPESTCREFAGLVDDVVCATMPTPFLAVGESFWDFRQVTDEEVRRLLATPTAGPSLRRPAASTAADVLRRVAIDAPGGVPTHEVLAELVGDARIVLIGESSHGTHEFYQARAAMTQWLIEEKGFGAVAAEADWPDAYRVNRYVRGLGEDTNADEALSGFERFPAWMWRNTVVRDFVEWLRTRNQRYESGALRQAGFYGLDLYSLHRSIQEVISYLDKVDPRAAARARARYACFDHACADDGQAYGFAAAFGAGPSCEREAVEQLVDVQRNALAYARQDGLLAEDELFYAQQNAQTVRDAEVYYRAMFSGRVTSWNLRDQHMAQTLGSLLTHLDRHLDAPPARIVVWAHNSHVGDARATEVWADGQLTLGQIVRERYGDESRSIGFSTYTGTVTAASEWGGIAQRKAVRPALHGSVEELFHQTADSFLVSARLSRDAEAPLDVVRLGRAIGVVYLPATERQSHYLHVRPADQFDAMIHIDQTRALEPLEVTSRWIAGENPETYPTGL.

It in the N-terminal section; belongs to the purine/pyrimidine phosphoribosyltransferase family.

This is an uncharacterized protein from Mycobacterium tuberculosis (strain CDC 1551 / Oshkosh).